Here is a 197-residue protein sequence, read N- to C-terminus: Putative peptidyl-prolyl cis-trans isomerase (197 aa).

Positions 14–195 (GEIKVVMHTN…HDVVIESIDV (182 aa)) constitute a PPIase cyclophilin-type domain.

Belongs to the cyclophilin-type PPIase family.

It catalyses the reaction [protein]-peptidylproline (omega=180) = [protein]-peptidylproline (omega=0). In terms of biological role, PPIases accelerate the folding of proteins. It catalyzes the cis-trans isomerization of proline imidic peptide bonds in oligopeptides. This chain is Putative peptidyl-prolyl cis-trans isomerase, found in Staphylococcus aureus (strain COL).